The chain runs to 420 residues: L-rhamnose isomerase (420 aa).

Mn(2+) is bound by residues His-264, Asp-296, and Asp-298.

The protein belongs to the rhamnose isomerase family. Mn(2+) serves as cofactor.

The protein localises to the cytoplasm. The catalysed reaction is L-rhamnopyranose = L-rhamnulose. Its pathway is carbohydrate degradation; L-rhamnose degradation; glycerone phosphate from L-rhamnose: step 1/3. Catalyzes the interconversion of L-rhamnose and L-rhamnulose. The protein is L-rhamnose isomerase of Listeria monocytogenes serotype 4b (strain CLIP80459).